The primary structure comprises 83 residues: Small ribosomal subunit protein bS16 (83 aa).

This sequence belongs to the bacterial ribosomal protein bS16 family.

This chain is Small ribosomal subunit protein bS16, found in Shewanella baltica (strain OS223).